We begin with the raw amino-acid sequence, 181 residues long: Malignant T-cell-amplified sequence 1-A (181 aa).

Residues 92-171 (LPHQQVDKGA…IGIENIHYLN (80 aa)) form the PUA domain.

Belongs to the MCTS1 family.

It is found in the cytoplasm. In terms of biological role, plays a role as translation enhancer and involved in cell cycle regulation. The sequence is that of Malignant T-cell-amplified sequence 1-A (mcts1-a) from Xenopus laevis (African clawed frog).